Consider the following 347-residue polypeptide: Protein RecA (347 aa).

Position 66–73 (66–73) interacts with ATP; the sequence is GPESSGKT.

It belongs to the RecA family.

The protein resides in the cytoplasm. Its function is as follows. Can catalyze the hydrolysis of ATP in the presence of single-stranded DNA, the ATP-dependent uptake of single-stranded DNA by duplex DNA, and the ATP-dependent hybridization of homologous single-stranded DNAs. It interacts with LexA causing its activation and leading to its autocatalytic cleavage. This Methylococcus capsulatus (strain ATCC 33009 / NCIMB 11132 / Bath) protein is Protein RecA.